The primary structure comprises 543 residues: 2,3-bisphosphoglycerate-independent phosphoglycerate mutase (543 aa).

2 residues coordinate Mn(2+): aspartate 20 and serine 73. Serine 73 (phosphoserine intermediate) is an active-site residue. Substrate contacts are provided by residues histidine 134, 166 to 167 (RD), arginine 198, arginine 204, 278 to 281 (RGDR), and lysine 360. Residues aspartate 428, histidine 432, aspartate 469, histidine 470, and histidine 488 each contribute to the Mn(2+) site.

It belongs to the BPG-independent phosphoglycerate mutase family. As to quaternary structure, monomer. The cofactor is Mn(2+).

The enzyme catalyses (2R)-2-phosphoglycerate = (2R)-3-phosphoglycerate. Its pathway is carbohydrate degradation; glycolysis; pyruvate from D-glyceraldehyde 3-phosphate: step 3/5. Catalyzes the interconversion of 2-phosphoglycerate and 3-phosphoglycerate. This Rhodopirellula baltica (strain DSM 10527 / NCIMB 13988 / SH1) protein is 2,3-bisphosphoglycerate-independent phosphoglycerate mutase.